Reading from the N-terminus, the 123-residue chain is Large ribosomal subunit protein bL12 (123 aa).

This sequence belongs to the bacterial ribosomal protein bL12 family. As to quaternary structure, homodimer. Part of the ribosomal stalk of the 50S ribosomal subunit. Forms a multimeric L10(L12)X complex, where L10 forms an elongated spine to which 2 to 4 L12 dimers bind in a sequential fashion. Binds GTP-bound translation factors.

Forms part of the ribosomal stalk which helps the ribosome interact with GTP-bound translation factors. Is thus essential for accurate translation. This is Large ribosomal subunit protein bL12 from Photorhabdus laumondii subsp. laumondii (strain DSM 15139 / CIP 105565 / TT01) (Photorhabdus luminescens subsp. laumondii).